The following is a 162-amino-acid chain: Flagellar assembly factor FliW (162 aa).

This sequence belongs to the FliW family. In terms of assembly, interacts with translational regulator CsrA and flagellin(s).

The protein resides in the cytoplasm. In terms of biological role, acts as an anti-CsrA protein, binds CsrA and prevents it from repressing translation of its target genes, one of which is flagellin. Binds to flagellin and participates in the assembly of the flagellum. This is Flagellar assembly factor FliW from Alkaliphilus metalliredigens (strain QYMF).